A 206-amino-acid chain; its full sequence is Large ribosomal subunit protein uL4 (206 aa).

The interval 63 to 93 (MYKQKGTGRARHHSARAPQFRGGGKAHGPVV) is disordered. A compositionally biased stretch (basic residues) spans 64–77 (YKQKGTGRARHHSA).

It belongs to the universal ribosomal protein uL4 family. As to quaternary structure, part of the 50S ribosomal subunit.

One of the primary rRNA binding proteins, this protein initially binds near the 5'-end of the 23S rRNA. It is important during the early stages of 50S assembly. It makes multiple contacts with different domains of the 23S rRNA in the assembled 50S subunit and ribosome. Functionally, forms part of the polypeptide exit tunnel. This Sinorhizobium fredii (strain NBRC 101917 / NGR234) protein is Large ribosomal subunit protein uL4.